The following is a 536-amino-acid chain: Nucleosome assembly protein 1-like 3 (536 aa).

Disordered stretches follow at residues 1–104 (MAEA…DKLP) and 160–338 (PTEE…KEDP). A compositionally biased stretch (low complexity) spans 35–75 (SNSSSSTTSCGSTGSSSSSSSSSSSSSSSSSGSSGSSSNGS). Basic residues predominate over residues 77–95 (LHQKKRVPGPSRRAQRRPS). The span at 160-184 (PTEEECEWNSEEEFSGDEEMQDDTP) shows a compositional bias: acidic residues. Basic and acidic residues-rich tracts occupy residues 199 to 220 (GKENTEVKEEVKDVPEEVPEAK) and 227 to 269 (PKET…KTDS). Over residues 287–300 (TQANAEYTDQPTED) the composition is skewed to polar residues. Residues 306–324 (PVREAQKRVPETRPEERVN) are compositionally biased toward basic and acidic residues.

It belongs to the nucleosome assembly protein (NAP) family.

It localises to the nucleus. This chain is Nucleosome assembly protein 1-like 3 (Nap1l3), found in Rattus norvegicus (Rat).